The primary structure comprises 125 residues: Small ribosomal subunit protein eS8 (125 aa).

The span at 1–23 shows a compositional bias: basic residues; the sequence is MQFQGRSRRKYTGAKLKSARGKR. Positions 1–34 are disordered; it reads MQFQGRSRRKYTGAKLKSARGKRKFELGREPAAT.

The protein belongs to the eukaryotic ribosomal protein eS8 family. In terms of assembly, part of the 30S ribosomal subunit.

This chain is Small ribosomal subunit protein eS8, found in Methanococcoides burtonii (strain DSM 6242 / NBRC 107633 / OCM 468 / ACE-M).